We begin with the raw amino-acid sequence, 85 residues long: Large ribosomal subunit protein bL27 (85 aa).

Residues 1 to 21 (MAHKKAAGSSRNGRDSESKRL) form a disordered region.

The protein belongs to the bacterial ribosomal protein bL27 family.

The protein is Large ribosomal subunit protein bL27 of Chromohalobacter salexigens (strain ATCC BAA-138 / DSM 3043 / CIP 106854 / NCIMB 13768 / 1H11).